An 87-amino-acid polypeptide reads, in one-letter code: Small ribosomal subunit protein bS20 (87 aa).

Over residues 1-12 (MANHKSALKRNR) the composition is skewed to basic residues. A disordered region spans residues 1–21 (MANHKSALKRNRQAAVRNARN).

Belongs to the bacterial ribosomal protein bS20 family.

Its function is as follows. Binds directly to 16S ribosomal RNA. The polypeptide is Small ribosomal subunit protein bS20 (Syntrophotalea carbinolica (strain DSM 2380 / NBRC 103641 / GraBd1) (Pelobacter carbinolicus)).